A 273-amino-acid polypeptide reads, in one-letter code: 2,3,4,5-tetrahydropyridine-2,6-dicarboxylate N-succinyltransferase (273 aa).

This sequence belongs to the transferase hexapeptide repeat family.

It localises to the cytoplasm. It carries out the reaction (S)-2,3,4,5-tetrahydrodipicolinate + succinyl-CoA + H2O = (S)-2-succinylamino-6-oxoheptanedioate + CoA. Its pathway is amino-acid biosynthesis; L-lysine biosynthesis via DAP pathway; LL-2,6-diaminopimelate from (S)-tetrahydrodipicolinate (succinylase route): step 1/3. The protein is 2,3,4,5-tetrahydropyridine-2,6-dicarboxylate N-succinyltransferase of Acinetobacter baumannii (strain AB307-0294).